A 94-amino-acid chain; its full sequence is MSCYTAILKSVGGLALFQVANGAIDLCRHFFMYFCEQKLRPNSFWFVVVRAIASMIMYLVLGIALLYISEQDNKKNTNNDKRNESSINSNSSPK.

The signal sequence occupies residues 1 to 22; it reads MSCYTAILKSVGGLALFQVANG. Residues 23–45 lie on the Intravirion side of the membrane; it reads AIDLCRHFFMYFCEQKLRPNSFW. Residues 46–66 traverse the membrane as a helical segment; it reads FVVVRAIASMIMYLVLGIALL. Residues 67–83 lie on the Virion surface side of the membrane; sequence YISEQDNKKNTNNDKRN. Over residues 74–84 the composition is skewed to basic and acidic residues; sequence KKNTNNDKRNE. The disordered stretch occupies residues 74 to 94; sequence KKNTNNDKRNESSINSNSSPK. A glycan (N-linked (GlcNAc...) asparagine; by host) is linked at Asn-83. Over residues 85–94 the composition is skewed to polar residues; the sequence is SSINSNSSPK.

Belongs to the oerthopoxvirus OPG135 family.

It localises to the virion membrane. Its subcellular location is the host cytoplasm. Its function is as follows. Envelope protein. Required for an early step in virion morphogenesis. The chain is Virion membrane protein OPG135 (OPG135) from Homo sapiens (Human).